A 441-amino-acid polypeptide reads, in one-letter code: DNA primase DnaG (441 aa).

Positions Asp-165–Pro-241 constitute a Toprim domain. The Mg(2+) site is built by Glu-171, Asp-215, and Asp-217. Positions Lys-299–Gly-315 are enriched in basic and acidic residues. The tract at residues Lys-299–Thr-320 is disordered.

It belongs to the archaeal DnaG primase family. As to quaternary structure, forms a ternary complex with MCM helicase and DNA. Component of the archaeal exosome complex. Requires Mg(2+) as cofactor.

The enzyme catalyses ssDNA + n NTP = ssDNA/pppN(pN)n-1 hybrid + (n-1) diphosphate.. Its function is as follows. RNA polymerase that catalyzes the synthesis of short RNA molecules used as primers for DNA polymerase during DNA replication. Also part of the exosome, which is a complex involved in RNA degradation. Acts as a poly(A)-binding protein that enhances the interaction between heteromeric, adenine-rich transcripts and the exosome. This chain is DNA primase DnaG, found in Ignicoccus hospitalis (strain KIN4/I / DSM 18386 / JCM 14125).